A 173-amino-acid chain; its full sequence is Mesogenin-1 (173 aa).

The segment covering 39–68 (ESYSLSQTPSPQSVSPAASYESTYSSSPHT) has biased composition (polar residues). 2 disordered regions span residues 39-69 (ESYS…PHTG) and 96-117 (TKKD…ASER). Over residues 99-114 (DHGHKTSMTTHRRRKA) the composition is skewed to basic residues. One can recognise a bHLH domain in the interval 109 to 163 (HRRRKASEREKLRMRAIAEALHTLRNNLPPMYSQGRQPLTKIQTLKCTINYISEL).

It is found in the nucleus. Involved in specifying the paraxial, but not dorsal, mesoderm. May regulate the expression of T-box transcription factors required for mesoderm formation and differentiation, such as brachyury T, wnt8, vegt and eomes. This Xenopus laevis (African clawed frog) protein is Mesogenin-1 (msgn1).